The chain runs to 98 residues: Histone H4-like protein type G (98 aa).

The DNA-binding element occupies 17–21 (KCHRK).

It belongs to the histone H4 family. As to quaternary structure, the nucleosome is a histone octamer containing two molecules each of H2A, H2B, H3 and H4 assembled in one H3-H4 heterotetramer and two H2A-H2B heterodimers. The octamer wraps approximately 147 bp of DNA.

The protein localises to the nucleus. It is found in the chromosome. Functionally, core component of nucleosome. Nucleosomes wrap and compact DNA into chromatin, limiting DNA accessibility to the cellular machineries which require DNA as a template. Histones thereby play a central role in transcription regulation, DNA repair, DNA replication and chromosomal stability. DNA accessibility is regulated via a complex set of post-translational modifications of histones, also called histone code, and nucleosome remodeling. The polypeptide is Histone H4-like protein type G (Homo sapiens (Human)).